The sequence spans 235 residues: Large ribosomal subunit protein uL1 (235 aa).

This sequence belongs to the universal ribosomal protein uL1 family. In terms of assembly, part of the 50S ribosomal subunit.

Its function is as follows. Binds directly to 23S rRNA. The L1 stalk is quite mobile in the ribosome, and is involved in E site tRNA release. Protein L1 is also a translational repressor protein, it controls the translation of the L11 operon by binding to its mRNA. The polypeptide is Large ribosomal subunit protein uL1 (Synechococcus sp. (strain CC9605)).